Consider the following 284-residue polypeptide: L-ribulose-5-phosphate 3-epimerase UlaE (284 aa).

The protein belongs to the L-ribulose-5-phosphate 3-epimerase family.

It catalyses the reaction L-ribulose 5-phosphate = L-xylulose 5-phosphate. Its pathway is cofactor degradation; L-ascorbate degradation; D-xylulose 5-phosphate from L-ascorbate: step 3/4. Catalyzes the isomerization of L-xylulose-5-phosphate to L-ribulose-5-phosphate. Is involved in the anaerobic L-ascorbate utilization. This is L-ribulose-5-phosphate 3-epimerase UlaE from Escherichia coli O8 (strain IAI1).